The sequence spans 238 residues: Major prion protein (238 aa).

The N-terminal stretch at 1 to 15 (MLVLFVATWSDLGLC) is a signal peptide. The tract at residues 16 to 215 (KKRPKPGGWN…ESQAYYQRGS (200 aa)) is interaction with GRB2, ERI3 and SYN1. Residues 18 to 93 (RPKPGGWNTG…WHKPSKPKTS (76 aa)) are disordered. 4 tandem repeats follow at residues 44-52 (PQGGGGWGQ), 53-60 (PHGGGWGQ), 61-68 (PHGGGWGQ), and 69-76 (PHGGGWGQ). The segment at 44–76 (PQGGGGWGQPHGGGWGQPHGGGWGQPHGGGWGQ) is 4 X 8 AA tandem repeats of P-H-G-G-G-W-G-Q. Gly residues predominate over residues 45–80 (QGGGGWGQPHGGGWGQPHGGGWGQPHGGGWGQGGGT). Residues glycine 47, glycine 48, histidine 54, glycine 55, glycine 56, histidine 62, glycine 63, glycine 64, histidine 70, glycine 71, and glycine 72 each contribute to the Cu(2+) site. Positions 83–93 (QWHKPSKPKTS) are enriched in basic residues. Cysteine 164 and cysteine 199 form a disulfide bridge. 2 N-linked (GlcNAc...) asparagine glycosylation sites follow: asparagine 166 and asparagine 182. Serine 215 carries the GPI-anchor amidated serine lipid modification. Positions 216–238 (SMVLFSSPPVILLISFLIFLIVG) are cleaved as a propeptide — removed in mature form.

Belongs to the prion family. In terms of assembly, monomer and homodimer. Has a tendency to aggregate into amyloid fibrils containing a cross-beta spine, formed by a steric zipper of superposed beta-strands. Soluble oligomers may represent an intermediate stage on the path to fibril formation. Copper binding may promote oligomerization. Interacts with GRB2, APP, ERI3/PRNPIP and SYN1. Mislocalized cytosolically exposed PrP interacts with MGRN1; this interaction alters MGRN1 subcellular location and causes lysosomal enlargement. Interacts with KIAA1191.

It is found in the cell membrane. The protein resides in the golgi apparatus. Its primary physiological function is unclear. Has cytoprotective activity against internal or environmental stresses. May play a role in neuronal development and synaptic plasticity. May be required for neuronal myelin sheath maintenance. May play a role in iron uptake and iron homeostasis. Soluble oligomers are toxic to cultured neuroblastoma cells and induce apoptosis (in vitro). Association with GPC1 (via its heparan sulfate chains) targets PRNP to lipid rafts. Also provides Cu(2+) or Zn(2+) for the ascorbate-mediated GPC1 deaminase degradation of its heparan sulfate side chains. This is Major prion protein (PRNP) from Macaca sylvanus (Barbary macaque).